A 382-amino-acid polypeptide reads, in one-letter code: S-adenosylmethionine synthase (382 aa).

His-16 is a binding site for ATP. Residue Asp-18 coordinates Mg(2+). Residue Glu-44 participates in K(+) binding. L-methionine contacts are provided by Glu-57 and Gln-100. Residues Gln-100–Asn-110 form a flexible loop region. ATP is bound by residues Asp-165–Lys-167, Arg-231–Phe-232, Asp-240, Arg-246–Lys-247, and Lys-267. Asp-240 contacts L-methionine. Lys-271 contacts L-methionine.

Belongs to the AdoMet synthase family. In terms of assembly, homotetramer; dimer of dimers. The cofactor is Mg(2+). K(+) is required as a cofactor.

It localises to the cytoplasm. It carries out the reaction L-methionine + ATP + H2O = S-adenosyl-L-methionine + phosphate + diphosphate. The protein operates within amino-acid biosynthesis; S-adenosyl-L-methionine biosynthesis; S-adenosyl-L-methionine from L-methionine: step 1/1. Functionally, catalyzes the formation of S-adenosylmethionine (AdoMet) from methionine and ATP. The overall synthetic reaction is composed of two sequential steps, AdoMet formation and the subsequent tripolyphosphate hydrolysis which occurs prior to release of AdoMet from the enzyme. The polypeptide is S-adenosylmethionine synthase (Legionella pneumophila (strain Paris)).